Reading from the N-terminus, the 426-residue chain is Tol-Pal system protein TolB (426 aa).

Residues 1-25 form the signal peptide; sequence MSITPSLSRRTVMSLLAAGLSPAFA.

Belongs to the TolB family. As to quaternary structure, the Tol-Pal system is composed of five core proteins: the inner membrane proteins TolA, TolQ and TolR, the periplasmic protein TolB and the outer membrane protein Pal. They form a network linking the inner and outer membranes and the peptidoglycan layer.

It localises to the periplasm. Part of the Tol-Pal system, which plays a role in outer membrane invagination during cell division and is important for maintaining outer membrane integrity. The sequence is that of Tol-Pal system protein TolB from Polaromonas sp. (strain JS666 / ATCC BAA-500).